We begin with the raw amino-acid sequence, 624 residues long: MDLHYDCAESPAAEQPSGKINKTAFKLFGKRRSGSAMPTIFGVKNKGDGKGTGNIGMVRSKTLDGLADVVLESNKKEEPCTNAGAGQLNTEKSPKVVTINPDVSSDSSVAKSHSFFSLLKRNGKSENVKGELAEQKPGSRQKRGLKGLFNSMRWSKKDKSYKDDKEGASENQPGLILPSSLTASLECIKEETQKPLCEKEKSEEDIPADVPSVEHSGDVNTSAEENPLNGCVESPCPALITKEPQLEDPPVIQQVDNLYQLPDPEVETLPDNKDEDVTGDIPVNTVSIVEPECDVGQEIAAPDPTTVDPPSEPSFDRICLMLADVTSLKSFDSLTGCGDVIADQDDDGGSSKGSKVVPGNGKKVTSKKNANIVAYQGGGEEMASPEEADETYVQELFSMIPQSEGASEKPEKVNGTTQVTAREVKCSDSGRDRNTVKPSKLRQVPIRRKERGDQNSKGNEKRQCHRNSDEGYWDSTTLGQEEEEPRSVGKQALPRDSCSGDALYDLYTDPDESIPKAQAEEPPVSHSHSKPLSPVTASCPVKTASSNKESKIPISIKHLPVHTTNQGIDSGSGSAAGHSHPVKSELPRTKIPVSKVLVRRVSNKAITETAAGKRAIHDPARKHH.

Disordered regions lie at residues Glu-77–Lys-111, Glu-126–Leu-177, Pro-195–Gly-230, Ala-342–Asn-369, and Phe-397–Arg-588. The span at Asp-102–Lys-111 shows a compositional bias: low complexity. Composition is skewed to basic and acidic residues over residues Ser-155–Ala-168 and Pro-195–Glu-204. The span at Lys-352–Lys-363 shows a compositional bias: low complexity. 2 stretches are compositionally biased toward basic and acidic residues: residues Arg-422 to Thr-435 and Glu-450 to Asp-469.

The protein belongs to the Amer family.

Its subcellular location is the cell membrane. Functionally, negative regulator of the canonical Wnt signaling pathway involved in neuroectodermal patterning. Acts by specifically binding phosphatidylinositol 4,5-bisphosphate (PtdIns(4,5)P2), translocating to the cell membrane and interacting with key regulators of the canonical Wnt signaling pathway, such as components of the beta-catenin destruction complex. This chain is APC membrane recruitment protein 2 (amer2), found in Xenopus laevis (African clawed frog).